Consider the following 188-residue polypeptide: Translation machinery-associated protein 22 (188 aa).

The SUI1 domain maps to 96 to 167 (VTIKRIERNK…EIEEFLLEKY (72 aa)).

This sequence belongs to the DENR family. In terms of assembly, interacts with the 40S ribosomal subunit.

It is found in the cytoplasm. The protein is Translation machinery-associated protein 22 (TMA22) of Chaetomium globosum (strain ATCC 6205 / CBS 148.51 / DSM 1962 / NBRC 6347 / NRRL 1970) (Soil fungus).